A 211-amino-acid polypeptide reads, in one-letter code: Uridine kinase (211 aa).

12–19 provides a ligand contact to ATP; that stretch reads GGSGSGKT.

Belongs to the uridine kinase family.

It is found in the cytoplasm. It catalyses the reaction uridine + ATP = UMP + ADP + H(+). The catalysed reaction is cytidine + ATP = CMP + ADP + H(+). The protein operates within pyrimidine metabolism; CTP biosynthesis via salvage pathway; CTP from cytidine: step 1/3. It functions in the pathway pyrimidine metabolism; UMP biosynthesis via salvage pathway; UMP from uridine: step 1/1. This is Uridine kinase from Anoxybacillus flavithermus (strain DSM 21510 / WK1).